Consider the following 46-residue polypeptide: Succinate dehydrogenase subunit 8, mitochondrial (46 aa).

In terms of assembly, component of complex II composed of eight subunits in plants: four classical SDH subunits SDH1, SDH2, SDH3 and SDH4 (a flavoprotein (FP), an iron-sulfur protein (IP), and a cytochrome b composed of a large and a small subunit.), as well as four subunits unknown in mitochondria from bacteria and heterotrophic eukaryotes.

The protein resides in the mitochondrion inner membrane. It functions in the pathway carbohydrate metabolism; tricarboxylic acid cycle. This Arabidopsis thaliana (Mouse-ear cress) protein is Succinate dehydrogenase subunit 8, mitochondrial.